The chain runs to 596 residues: Deuterosome assembly protein 1 (596 aa).

Coiled coils occupy residues 8–68 (IARN…NHEI), 130–180 (CELQ…FQKE), and 227–284 (IENL…DLLR). The segment covering 297–306 (TANLANQKTA) has biased composition (polar residues). A disordered region spans residues 297 to 316 (TANLANQKTAQGEEASFQVT). Residues 337–402 (SEKYQAENDL…LKGAQNRQTS (66 aa)) are a coiled coil. Positions 447-467 (DKPQKHRSFHGENNSLKPTNY) are disordered. The span at 457–467 (GENNSLKPTNY) shows a compositional bias: polar residues.

Belongs to the CEP63 family.

Its subcellular location is the cytoplasm. Functionally, key structural component of the deuterosome, a structure that promotes de novo centriole amplification in multiciliated cells. Deuterosome-mediated centriole amplification occurs in terminally differentiated multiciliated cells and can generate more than 100 centrioles. Probably sufficient for the specification and formation of the deuterosome inner core. This Xenopus tropicalis (Western clawed frog) protein is Deuterosome assembly protein 1.